Here is a 599-residue protein sequence, read N- to C-terminus: DNA primase (599 aa).

A CHC2-type zinc finger spans residues 38–62; it reads CPFHQEKTPSFTVSDSKRFFYCFGC. A Toprim domain is found at 250 to 332; it reads NYSILVEGYF…EKKISFIRLP (83 aa). Mg(2+)-binding residues include Glu256, Asp300, and Asp302.

The protein belongs to the DnaG primase family. Monomer. Interacts with DnaB. Zn(2+) is required as a cofactor. The cofactor is Mg(2+).

It carries out the reaction ssDNA + n NTP = ssDNA/pppN(pN)n-1 hybrid + (n-1) diphosphate.. RNA polymerase that catalyzes the synthesis of short RNA molecules used as primers for DNA polymerase during DNA replication. The protein is DNA primase of Rickettsia bellii (strain RML369-C).